Here is a 255-residue protein sequence, read N- to C-terminus: Pimeloyl-[acyl-carrier protein] methyl ester esterase (255 aa).

The 226-residue stretch at 16–241 (LVLLHGWGLN…AAHAPFISHP (226 aa)) folds into the AB hydrolase-1 domain. Substrate contacts are provided by residues W22, 81–82 (SL), and 142–146 (FLALQ). S81 (nucleophile) is an active-site residue. Active-site residues include D206 and H234. H234 contributes to the substrate binding site.

It belongs to the AB hydrolase superfamily. Carboxylesterase BioH family. As to quaternary structure, monomer.

It is found in the cytoplasm. It carries out the reaction 6-carboxyhexanoyl-[ACP] methyl ester + H2O = 6-carboxyhexanoyl-[ACP] + methanol + H(+). Its pathway is cofactor biosynthesis; biotin biosynthesis. Its function is as follows. The physiological role of BioH is to remove the methyl group introduced by BioC when the pimeloyl moiety is complete. It allows to synthesize pimeloyl-ACP via the fatty acid synthetic pathway through the hydrolysis of the ester bonds of pimeloyl-ACP esters. Also displays a weak thioesterase activity. Can form a complex with CoA, and may be involved in the condensation of CoA and pimelic acid into pimeloyl-CoA, a precursor in biotin biosynthesis. The protein is Pimeloyl-[acyl-carrier protein] methyl ester esterase of Serratia marcescens.